Here is a 321-residue protein sequence, read N- to C-terminus: Replication factor C small subunit (321 aa).

43–50 provides a ligand contact to ATP; it reads GFAGVGKT.

This sequence belongs to the activator 1 small subunits family. RfcS subfamily. Heteromultimer composed of small subunits (RfcS) and large subunits (RfcL).

In terms of biological role, part of the RFC clamp loader complex which loads the PCNA sliding clamp onto DNA. This Methanosphaera stadtmanae (strain ATCC 43021 / DSM 3091 / JCM 11832 / MCB-3) protein is Replication factor C small subunit.